The chain runs to 330 residues: Aspartate--ammonia ligase (330 aa).

The protein belongs to the class-II aminoacyl-tRNA synthetase family. AsnA subfamily.

The protein localises to the cytoplasm. It catalyses the reaction L-aspartate + NH4(+) + ATP = L-asparagine + AMP + diphosphate + H(+). It functions in the pathway amino-acid biosynthesis; L-asparagine biosynthesis; L-asparagine from L-aspartate (ammonia route): step 1/1. The protein is Aspartate--ammonia ligase of Salmonella schwarzengrund (strain CVM19633).